The chain runs to 349 residues: MAAEEEEMDSTDACERSGWLTGWLPTWCPTSTSHLKEAEEKILKCVPCIYKKGPVRISNGNKIWTLKLSHNISNKIPLVLLHGFGGGLGLWALNFGDLCTNRPVYAFDLLGFGRSSRPRFDTDAEEVENQFVESIEEWRCALGLDKVILLGHNLGGFLAAAYSLKYPSRVSHLILVEPWGFPERPDLADQERPIPVWIRALGAALTPFNPLAGLRIAGPFGLSLVQRLRPDFKRKYSSMFEDDTVTEYIYHCNVQTPSGETAFKNMTIPYGWAKRPMLHRIGKMNPDIPVSVIYGARSCIDGNSGTSIQSLRPHSYVKTIAILGAGHYVYADQPEDFNLKVKEICDTVD.

At Ala-2 the chain carries N-acetylalanine. One can recognise an AB hydrolase-1 domain in the interval 77 to 185; that stretch reads PLVLLHGFGG…VEPWGFPERP (109 aa). The short motif at 327–332 is the HXXXXD motif element; the sequence is HYVYAD.

The protein belongs to the peptidase S33 family. ABHD4/ABHD5 subfamily. In terms of assembly, interacts with ADRP, PLIN and PNPLA2. Interacts with PLIN5; promotes interaction with PNPLA2.

It localises to the cytoplasm. The protein resides in the lipid droplet. It catalyses the reaction a 1-acyl-sn-glycero-3-phosphate + an acyl-CoA = a 1,2-diacyl-sn-glycero-3-phosphate + CoA. The enzyme catalyses 1-(9Z-octadecenoyl)-sn-glycero-3-phosphate + (9Z)-octadecenoyl-CoA = 1,2-di-(9Z-octadecenoyl)-sn-glycero-3-phosphate + CoA. It carries out the reaction 1-(9Z-octadecenoyl)-sn-glycero-3-phosphate + hexadecanoyl-CoA = 1-(9Z)-octadecenoyl-2-hexadecanoyl-sn-glycero-3-phosphate + CoA. The catalysed reaction is 1-(9Z-octadecenoyl)-sn-glycero-3-phosphate + octadecanoyl-CoA = 1-(9Z-octadecenoyl)-2-octadecanoyl-sn-glycero-3-phosphate + CoA. It catalyses the reaction 1-(9Z-octadecenoyl)-sn-glycero-3-phosphate + (5Z,8Z,11Z,14Z)-eicosatetraenoyl-CoA = 1-(9Z)-octadecenoyl-2-(5Z,8Z,11Z,14Z)-eicosatetraenoyl-sn-glycero-3-phosphate + CoA. The enzyme catalyses eicosanoyl-CoA + 1-(9Z-octadecenoyl)-sn-glycero-3-phosphate = 1-(9Z)-octadecenoyl-2-eicosanoyl-sn-glycero-3-phosphate + CoA. It carries out the reaction 1-hexadecanoyl-sn-glycero-3-phosphate + (9Z)-octadecenoyl-CoA = 1-hexadecanoyl-2-(9Z-octadecenoyl)-sn-glycero-3-phosphate + CoA. The catalysed reaction is 1-octadecanoyl-sn-glycero-3-phosphate + (9Z)-octadecenoyl-CoA = 1-octadecanoyl-2-(9Z-octadecenoyl)-sn-glycero-3-phosphate + CoA. It catalyses the reaction 1-(5Z,8Z,11Z,14Z-eicosatetraenoyl)-sn-glycero-3-phosphate + (9Z)-octadecenoyl-CoA = 1-(5Z,8Z,11Z,14Z)-eicosatetraenoyl-2-(9Z)-octadecenoyl-sn-glycero-3-phosphate + CoA. Acyltransferase activity is inhibited by detergents such as Triton X-100 and 3-[(3-cholamidopropyl)dimethylammonio]-1-propanesulfonate (CHAPS). Acyltransferase activity is inhibited by the presence of magnesium and calcium. Coenzyme A-dependent lysophosphatidic acid acyltransferase that catalyzes the transfer of an acyl group on a lysophosphatidic acid. Functions preferentially with 1-oleoyl-lysophosphatidic acid followed by 1-palmitoyl-lysophosphatidic acid, 1-stearoyl-lysophosphatidic acid and 1-arachidonoyl-lysophosphatidic acid as lipid acceptor. Functions preferentially with arachidonoyl-CoA followed by oleoyl-CoA as acyl group donors. Functions in phosphatidic acid biosynthesis. May regulate the cellular storage of triacylglycerol through activation of the phospholipase PNPLA2. Involved in keratinocyte differentiation. Regulates lipid droplet fusion. In Sus scrofa (Pig), this protein is 1-acylglycerol-3-phosphate O-acyltransferase ABHD5.